A 247-amino-acid chain; its full sequence is PF03932 family protein CutC (247 aa).

Belongs to the CutC family.

It localises to the cytoplasm. The sequence is that of PF03932 family protein CutC from Klebsiella pneumoniae subsp. pneumoniae (strain ATCC 700721 / MGH 78578).